Consider the following 859-residue polypeptide: Linoleate 9S-lipoxygenase 1 (859 aa).

One can recognise a PLAT domain in the interval 21-161; sequence VKGTVVLMKK…HYTTDRVFFS (141 aa). The Lipoxygenase domain maps to 164-859; sequence TYLPHETPAT…GRGIPNSVSI (696 aa). A disordered region spans residues 213-246; the sequence is KNPRPVLGGTQEYPYPRRGRTGRKPTKEDPQTES. Fe cation-binding residues include histidine 519, histidine 524, histidine 711, asparagine 715, and isoleucine 859.

Belongs to the lipoxygenase family. In terms of assembly, monomer. Fe cation is required as a cofactor. As to expression, seedlings, roots, leaves, and flowers (at protein level). Expressed in guard cells.

The protein resides in the cytoplasm. The enzyme catalyses (9Z,12Z)-octadecadienoate + O2 = (9S)-hydroperoxy-(10E,12Z)-octadecadienoate. It carries out the reaction (9Z,12Z,15Z)-octadecatrienoate + O2 = (9S)-hydroperoxy-(10E,12Z,15Z)-octadecatrienoate. The protein operates within lipid metabolism; oxylipin biosynthesis. In terms of biological role, 9S-lipoxygenase that can use linoleic acid or linolenic acid as substrates. Plant lipoxygenases may be involved in a number of diverse aspects of plant physiology including growth and development, pest resistance, and senescence or responses to wounding. Catalyzes the hydroperoxidation of lipids containing a cis,cis-1,4-pentadiene structure. Function as regulators of root development by controlling the emergence of lateral roots. 9S-lypoxygenase-derived oxylipins may play an antagonistic role to ethylene signaling in the control of responses involving oxidative stress, lipid peroxidation and plant defense. LOX1-derived oxylipins may be involved in stress signaling from roots to shoots in response to cadmium exposure. 9S-lypoxygenase-derived oxylipins are engaged during infection to control the balance between salicylic acid (SA) and jasmonate (JA) signaling to facilitate infection by the fungal pathogen Fusarium graminearum. 9S-lypoxygenase-derived oxylipins activate brassinosteroid signaling to promote cell wall-based defense and limit pathogen infection. The LOX1-derived compound (9S)-hydroperoxy-(10E,12Z,15Z)-octadecatrienoate protects plant tissues against infection by the bacterial pathogen Pseudomonas syringae pv tomato DC3000. The LOX1-derived oxylipins are required to trigger stomatal closure in response to both infection by the bacterial pathogen Pseudomonas syringae pv tomato DC3000, and the pathogen-associated molecular pattern (PAMP) flagellin peptide flg22. Contributes to the oxidation of free fatty acids during seed aging. The polypeptide is Linoleate 9S-lipoxygenase 1 (Arabidopsis thaliana (Mouse-ear cress)).